A 415-amino-acid polypeptide reads, in one-letter code: MKGSYKSRWVIVIVVVIAAIAAFWFWQGRNDSRSAAPGATKQAQQSPAGGRRGMRSGPLAPVQAATAVEQAVPRYLTGLGTIIAANTVTVRSRVDGQLMALHFQEGQQVKAGDLLAEIDPSQFKVALAQTQGQLAKDKATLANARRDLARYQQLAKTNLVSRQELDAQQALVSETEGTIKADEASVASAQLQLDWSRITAPVDGRVGLKQVDVGNQISSGDTTGIVVITQTHPIDLVFTLPESDIATVVQAQKAGKPLVVEAWDRTNSKKLSEGTLLSLDNQIDATTGTIKVKARFNNQDDALFPNQFVNARMLVDTEQNAVVIPTAALQMGNEGHFVWVLNSENKVSKHLVTPGIQDSQKVVIRAGISAGDRVVTDGIDRLTEGAKVEVVEAQSATTPEEKATSREYAKKGARS.

Residues 1–21 (MKGSYKSRWVIVIVVVIAAIA) form the signal peptide. Disordered stretches follow at residues 32-60 (SRSA…GPLA) and 392-415 (EAQS…GARS). Positions 399–415 (PEEKATSREYAKKGARS) are enriched in basic and acidic residues.

It belongs to the membrane fusion protein (MFP) (TC 8.A.1) family. Part of a tripartite efflux system composed of MdtA, MdtB and MdtC.

The protein resides in the cell inner membrane. In terms of biological role, the MdtABC tripartite complex confers resistance against novobiocin and deoxycholate. In Escherichia coli (strain 55989 / EAEC), this protein is Multidrug resistance protein MdtA.